Here is a 266-residue protein sequence, read N- to C-terminus: HLA class II histocompatibility antigen, DRB1 beta chain (266 aa).

An N-terminal signal peptide occupies residues 1–29 (MVCLKLPGGSCMTALTVTLMVLSSPLALS). Residues 30–124 (GDTRPRFLWQ…VESFTVQRRV (95 aa)) form a beta-1 region. Residues 30–227 (GDTRPRFLWQ…RARSESAQSK (198 aa)) lie on the Extracellular side of the membrane. A disulfide bridge connects residues cysteine 44 and cysteine 108. Asparagine 48 is a glycosylation site (N-linked (GlcNAc...) asparagine). 5 residues coordinate a peptide antigen: aspartate 86, tryptophan 90, histidine 110, asparagine 111, and arginine 122. A beta-2 region spans residues 125–227 (QPKVTVYPSK…RARSESAQSK (103 aa)). The Ig-like C1-type domain maps to 126-214 (PKVTVYPSKT…EHPSVTSPLT (89 aa)). A disulfide bond links cysteine 146 and cysteine 202. The helical transmembrane segment at 228 to 248 (MLSGVGGFVLGLLFLGAGLFI) threads the bilayer. The Cytoplasmic segment spans residues 249-266 (YFRNQKGHSGLQPTGFLS). Lysine 254 participates in a covalent cross-link: Glycyl lysine isopeptide (Lys-Gly) (interchain with G-Cter in ubiquitin).

Heterotrimer that consists of an alpha chain HLA-DRA, a beta chain HLA-DRB1 and a peptide (peptide-MHCII). Newly synthesized alpha and beta chains forms a heterodimer (MHCII) that associates with the CD74/invariant chain (Ii) in the endoplasmic reticulum (ER). Ii is a trimer composed of three subunits and each subunit interacts with one MHCII dimer, blocking the peptide-binding cleft. As a result, MHCII molecules cannot bind peptides present in the ER. The complex of MHCII and CD74/Ii is transported in vesicles from ER to Golgi to lysosomes, where it encounters antigenic peptides generated via proteolysis of endocytosed antigens. MHCII dimers are dissociated from CD74/Ii by the combined action of proteolysis and HLA-DM. Lysosomal enzymes such as cathepsin, degrade CD74/Ii leaving a 24 amino acid remnant called class II-associated Ii or CLIP. Interacts (via the peptide binding cleft) with CLIP; this interaction inhibits antigen peptide binding before entry in the endosomal compartment. The displacement of CLIP and replacement by a high affinity peptide in lysosomes is performed by HLA-DM heterodimer. HLA-DM catalyzes CLIP dissociation from MHCII, stabilizes empty MHCII and mediates the selection of high affinity peptides. Interacts with HLA-DM heterodimer; this interaction is direct. Interacts with TCR (via CDR3). Interacts (via beta-2 domain) with CD4 coreceptor (via Ig-like V-type domain); this interaction is of exceptionally low affinity yet necessary for optimal recognition of antigenic peptides. In terms of assembly, (Microbial infection) Interacts with Staphylococcus aureus enterotoxin A/entA, enterotoxin B/entB, enterotoxin C1/entC1, enterotoxin D/entD and enterotoxin H/entH. Enterotoxins bind outside the peptide-binding cleft of MHCII: enterotoxin H/entH interacts via the beta-1 domain of MHCII and in a zinc-dependent way, whereas enterotoxin B/entB interacts primarily via the alpha-1 domain. As to quaternary structure, (Microbial infection) Interacts with Epstein-Barr virus gp42 protein. Ubiquitinated by MARCHF1 and MARCHF8 at Lys-254 leading to sorting into the endosome system and down-regulation of MHCII. Expressed in professional APCs: monocyte/macrophages, dendritic cells and B cells (at protein level). Expressed in thymic epithelial cells (at protein level).

It localises to the cell membrane. Its subcellular location is the endoplasmic reticulum membrane. The protein resides in the lysosome membrane. The protein localises to the late endosome membrane. It is found in the autolysosome membrane. A beta chain of antigen-presenting major histocompatibility complex class II (MHCII) molecule. In complex with the alpha chain HLA-DRA, displays antigenic peptides on professional antigen presenting cells (APCs) for recognition by alpha-beta T cell receptor (TCR) on HLA-DRB1-restricted CD4-positive T cells. This guides antigen-specific T-helper effector functions, both antibody-mediated immune response and macrophage activation, to ultimately eliminate the infectious agents and transformed cells. Typically presents extracellular peptide antigens of 10 to 30 amino acids that arise from proteolysis of endocytosed antigens in lysosomes. In the tumor microenvironment, presents antigenic peptides that are primarily generated in tumor-resident APCs likely via phagocytosis of apoptotic tumor cells or macropinocytosis of secreted tumor proteins. Presents peptides derived from intracellular proteins that are trapped in autolysosomes after macroautophagy, a mechanism especially relevant for T cell selection in the thymus and central immune tolerance. The selection of the immunodominant epitopes follows two processing modes: 'bind first, cut/trim later' for pathogen-derived antigenic peptides and 'cut first, bind later' for autoantigens/self-peptides. The anchor residue at position 1 of the peptide N-terminus, usually a large hydrophobic residue, is essential for high affinity interaction with MHCII molecules. Its function is as follows. Allele DRB1*01:01: Displays an immunodominant epitope derived from Bacillus anthracis pagA/protective antigen, PA (KLPLYISNPNYKVNVYAVT), to both naive and PA-specific memory CD4-positive T cells. Presents immunodominant HIV-1 gag peptide (FRDYVDRFYKTLRAEQASQE) on infected dendritic cells for recognition by TRAV24-TRBV2 TCR on CD4-positive T cells and controls viral load. May present to T-helper 1 cells several HRV-16 epitopes derived from capsid proteins VP1 (PRFSLPFLSIASAYYMFYDG) and VP2 (PHQFINLRSNNSATLIVPYV), contributing to viral clearance. Displays commonly recognized peptides derived from IAV external protein HA (PKYVKQNTLKLAT and SNGNFIAPEYAYKIVK) and from internal proteins M, NP and PB1, with M-derived epitope (GLIYNRMGAVTTEV) being the most immunogenic. Presents a self-peptide derived from COL4A3 (GWISLWKGFSF) to TCR (TRAV14 biased) on CD4-positive, FOXP3-positive regulatory T cells and mediates immune tolerance to self. May present peptides derived from oncofetal trophoblast glycoprotein TPBG 5T4, known to be recognized by both T-helper 1 and regulatory T cells. Displays with low affinity a self-peptide derived from MBP (VHFFKNIVTPRTP). In terms of biological role, allele DRB1*03:01: May present to T-helper 1 cells an HRV-16 epitope derived from capsid protein VP2 (NEKQPSDDNWLNFDGTLLGN), contributing to viral clearance. Displays self-peptides derived from retinal SAG (NRERRGIALDGKIKHE) and thyroid TG (LSSVVVDPSIRHFDV). Presents viral epitopes derived from HHV-6B gH/U48 and U85 antigens to polyfunctional CD4-positive T cells with cytotoxic activity implicated in control of HHV-6B infection. Presents several immunogenic epitopes derived from C.tetani neurotoxin tetX, playing a role in immune recognition and long-term protection. Functionally, allele DRB1*04:01: Presents an immunodominant bacterial epitope derived from M.tuberculosis esxB/culture filtrate antigen CFP-10 (EISTNIRQAGVQYSR), eliciting CD4-positive T cell effector functions such as IFNG production and cytotoxic activity. May present to T-helper 1 cells an HRV-16 epitope derived from capsid protein VP2 (NEKQPSDDNWLNFDGTLLGN), contributing to viral clearance. Presents tumor epitopes derived from melanoma-associated TYR antigen (QNILLSNAPLGPQFP and DYSYLQDSDPDSFQD), triggering CD4-positive T cell effector functions such as GMCSF production. Displays preferentially citrullinated self-peptides derived from VIM (GVYATR/citSSAVR and SAVRAR/citSSVPGVR) and ACAN (VVLLVATEGR/ CitVRVNSAYQDK). Displays self-peptides derived from COL2A1. Allele DRB1*04:02: Displays native or citrullinated self-peptides derived from VIM. Its function is as follows. Allele DRB1*04:04: May present to T-helper 1 cells several HRV-16 epitopes derived from capsid proteins VP1 (HIVMQYMYVPPGAPIPTTRN) and VP2 (RGDSTITSQDVANAVVGYGV), contributing to viral clearance. Displays preferentially citrullinated self-peptides derived from VIM (SAVRAR/citSSVPGVR). In terms of biological role, allele DRB1*04:05: May present to T-helper 1 cells an immunogenic epitope derived from tumor-associated antigen WT1 (KRYFKLSHLQMHSRKH), likely providing for effective antitumor immunity in a wide range of solid and hematological malignancies. Functionally, allele DRB1*05:01: Presents an immunodominant HIV-1 gag peptide (FRDYVDRFYKTLRAEQASQE) on infected dendritic cells for recognition by TRAV24-TRBV2 TCR on CD4-positive T cells and controls viral load. Allele DRB1*07:01: Upon EBV infection, presents latent antigen EBNA2 peptide (PRSPTVFYNIPPMPLPPSQL) to CD4-positive T cells, driving oligoclonal expansion and selection of a dominant virus-specific memory T cell subset with cytotoxic potential to directly eliminate virus-infected B cells. May present to T-helper 1 cells several HRV-16 epitopes derived from capsid proteins VP1 (PRFSLPFLSIASAYYMFYDG) and VP2 (VPYVNAVPMDSMVRHNNWSL), contributing to viral clearance. In the context of tumor immunesurveillance, may present to T-helper 1 cells an immunogenic epitope derived from tumor-associated antigen WT1 (MTEYKLVVVGAVGVGKSALTIQLI), likely providing for effective antitumor immunity in a wide range of solid and hematological malignancies. In metastatic epithelial tumors, presents to intratumoral CD4-positive T cells a KRAS neoantigen (MTEYKLVVVGAVGVGKSALTIQLI) carrying G12V hotspot driver mutation and may mediate tumor regression. Its function is as follows. Allele DRB1*11:01: Displays an immunodominant HIV-1 gag peptide (FRDYVDRFYKTLRAEQASQE) on infected dendritic cells for recognition by TRAV24-TRBV2 TCR on CD4-positive T cells and controls viral load. May present to T-helper 1 cells an HRV-16 epitope derived from capsid protein VP2 (SDRIIQITRGDSTITSQDVA), contributing to viral clearance. Presents several immunogenic epitopes derived from C.tetani neurotoxin tetX, playing a role in immune recognition and longterm protection. In the context of tumor immunesurveillance, may present tumor-derived neoantigens to CD4-positive T cells and trigger anti-tumor helper functions. In terms of biological role, allele DRB1*13:01: Presents viral epitopes derived from HHV-6B antigens to polyfunctional CD4-positive T cells implicated in control of HHV-6B infection. Functionally, allele DRB1*15:01: May present to T-helper 1 cells an HRV-16 epitope derived from capsid protein VP2 (SNNSATLIVPYVNAVPMDSM), contributing to viral clearance. Displays a self-peptide derived from MBP (ENPVVHFFKNIVTPR). May present to T-helper 1 cells an immunogenic epitope derived from tumor-associated antigen WT1 (KRYFKLSHLQMHSRKH), likely providing for effective antitumor immunity in a wide range of solid and hematological malignancies. Allele DRB1*15:02: Displays an immunodominant HIV-1 gag peptide (FRDYVDRFYKTLRAEQASQE) on infected dendritic cells for recognition by TRAV24-TRBV2 TCR on CD4-positive T cells and controls viral load. May present to T-helper 1 cells an immunogenic epitope derived from tumor-associated antigen WT1 (KRYFKLSHLQMHSRKH), likely providing for effective antitumor immunity in a wide range of solid and hematological malignancies. Its function is as follows. (Microbial infection) Acts as a receptor for Epstein-Barr virus on lymphocytes. This chain is HLA class II histocompatibility antigen, DRB1 beta chain, found in Homo sapiens (Human).